Reading from the N-terminus, the 278-residue chain is Shikimate dehydrogenase (NADP(+)) (278 aa).

Shikimate is bound by residues 19 to 21 and threonine 66; that span reads SRS. Residue lysine 70 is the Proton acceptor of the active site. Shikimate-binding residues include asparagine 91 and aspartate 106. Residues 129–133 and phenylalanine 221 each bind NADP(+); that span reads GAGGA. Tyrosine 223 contacts shikimate. Glycine 242 lines the NADP(+) pocket.

Belongs to the shikimate dehydrogenase family. In terms of assembly, homodimer.

The catalysed reaction is shikimate + NADP(+) = 3-dehydroshikimate + NADPH + H(+). Its pathway is metabolic intermediate biosynthesis; chorismate biosynthesis; chorismate from D-erythrose 4-phosphate and phosphoenolpyruvate: step 4/7. In terms of biological role, involved in the biosynthesis of the chorismate, which leads to the biosynthesis of aromatic amino acids. Catalyzes the reversible NADPH linked reduction of 3-dehydroshikimate (DHSA) to yield shikimate (SA). The polypeptide is Shikimate dehydrogenase (NADP(+)) (Anaeromyxobacter dehalogenans (strain 2CP-1 / ATCC BAA-258)).